A 334-amino-acid polypeptide reads, in one-letter code: Endochitinase 3 (334 aa).

An N-terminal signal peptide occupies residues 1 to 23 (MRLLEFTALSSLLVLFLLLAVSA). The 42-residue stretch at 24 to 65 (EQCGKQAGGARCPSGMCCSNFGWCGNTQDYCGPGKCQSQCPS) folds into the Chitin-binding type-1 domain. Cystine bridges form between cysteine 26–cysteine 41, cysteine 35–cysteine 47, cysteine 40–cysteine 54, and cysteine 59–cysteine 63. Residues 64–84 (PSGPGPTPRPPTPTPGPSTGD) form a disordered region. Residues 66–79 (GPGPTPRPPTPTPG) are compositionally biased toward pro residues. Residues proline 73, proline 74, and proline 76 each carry the 4-hydroxyproline modification. 3 disulfide bridges follow: cysteine 106/cysteine 168, cysteine 180/cysteine 188, and cysteine 287/cysteine 319. The active-site Proton donor is glutamate 150. A propeptide spans 328–334 (GLLLETM) (removed in mature form).

The protein belongs to the glycosyl hydrolase 19 family. Chitinase class I subfamily. Post-translationally, the 4-hydroxyproline residues are not glycosylated in this plant vacuolar protein.

It is found in the vacuole. It carries out the reaction Random endo-hydrolysis of N-acetyl-beta-D-glucosaminide (1-&gt;4)-beta-linkages in chitin and chitodextrins.. Defense against chitin-containing fungal pathogens. This Nicotiana tabacum (Common tobacco) protein is Endochitinase 3 (CHN14).